Here is a 429-residue protein sequence, read N- to C-terminus: Probable alcohol acetyltransferase orf1 (429 aa).

The protein belongs to the alcohol acetyltransferase FCK4 family.

Its pathway is secondary metabolite biosynthesis. Functionally, probable alcohol acetyltransferase; part of the gene cluster that mediates the biosynthesis of the glycolipid biosurfactant ustilagic acid (UA). UA is a secreted cellobiose glycolipid that is toxic for many microorganisms and confers biocontrol activity to U.maydis. UA consists of 15,16-dihydroxypalmitic or 2,15,16-trihydroxypalmitic acid, which is O-glycosidically linked to cellobiose at its terminal hydroxyl group. In addition, the cellobiose moiety is acetylated and acylated with a short-chain hydroxy fatty acid. UA biosynthesis starts with omega-hydroxylation of palmitic acid catalyzed by the cytochrome P450 monooxygenase cyp1. Terminal hydroxylation of palmitic acid precedes subterminal hydroxylation catalyzed by the cytochrome P450 monooxygenase cyp2. Sequential glucosylation of the hydroxy fatty acid is probably catalyzed by the glycosyltransferase ugt1. The cellobiose lipid is further decorated by acetylation of the proximal glucose residue and by acylation with a short-chain beta-hydroxy fatty acid at the distal glucose residue. The acyltransferase uat1 may be a good candidate for catalyzing either acetylation or acylation of the cellobiose lipid. The fatty acid synthase fas2 may be involved in synthesis of the carbon backbone of the short-chain beta-hydroxy fatty acid esterified to the cellobiose disaccharide. The secreted UA consists of a mixture of both alpha-hydroxylated and non-hydroxylated glycolipids; therefore, alpha-hydroxylation of the long-chain fatty, catalyzed by the fatty acid hydroxylase ahd1, occurs late in UA biosynthesis and may be the last step before secretion. This Mycosarcoma maydis (Corn smut fungus) protein is Probable alcohol acetyltransferase orf1.